The following is a 596-amino-acid chain: Fumarate reductase (cytochrome) (596 aa).

A signal peptide spans 1–25 (MKKMNLAVCIATLMGTAGLMGTAVA). The heme c site is built by H33, C39, C42, H43, C61, C64, H65, H83, H86, C93, C96, H97, A99, H100, C107, C110, and H111. The tract at residues 143–596 (ALASAPHDTV…EEAAKYSKKN (454 aa)) is flavoprotein-like. FAD is bound by residues A162, E181, N189, A194, G195, G196, G303, and D369. G195 lines the fumarate pocket. Residue G195 coordinates succinate. Position 386 (Y386) interacts with heme c. 3 residues coordinate succinate: H390, T402, and E403. Positions 402 and 403 each coordinate fumarate. R427 serves as the catalytic Proton donor. H529 provides a ligand contact to fumarate. H529 is a binding site for succinate. Residues H530 and E559 each coordinate FAD. Residues R569 and G572 each coordinate fumarate. Positions 569 and 572 each coordinate succinate. FAD is bound by residues A574 and I575.

The protein in the C-terminal section; belongs to the FAD-dependent oxidoreductase 2 family. FRD/SDH subfamily. In terms of assembly, monomer. The cofactor is FAD. Requires heme c as cofactor.

It is found in the periplasm. It carries out the reaction 2 Fe(III)-[cytochrome c] + succinate = fumarate + 2 Fe(II)-[cytochrome c] + 2 H(+). Its activity is regulated as follows. Mesaconic acid is a competitive inhibitor of fumarate reduction. Its function is as follows. Flavocytochrome that catalyzes the reduction of fumarate to succinate. Is essential for fumarate respiration during anaerobic growth, acting as the terminal reductase. Receives electrons from the membrane-bound tetraheme c-type cytochrome CymA. Is essentially unidirectional, catalyzing only fumarate reduction. Cannot reduce nitrite, dimethylsulphoxide, trimethylamine-N-oxide (TMAO) or sulfite. In vitro, can use the artificial electron donor methyl viologen. In Shewanella frigidimarina (strain NCIMB 400), this protein is Fumarate reductase (cytochrome).